Consider the following 344-residue polypeptide: L-rhamnose-proton symporter (344 aa).

Helical transmembrane passes span 4 to 24 (AITM…CFYA), 38 to 58 (WSVG…ALLL), 68 to 88 (FSLS…IGNI), 101 to 121 (MGIG…TPII), 137 to 157 (TLLG…AGQL), 175 to 195 (LVLA…MNAA), 214 to 234 (LPSY…FCFI), 259 to 279 (VLLS…YAWG), 290 to 310 (ISWM…GLVL), and 323 to 343 (VLSL…IGMA).

The protein belongs to the L-rhamnose transporter (TC 2.A.7.6) family.

Its subcellular location is the cell inner membrane. The enzyme catalyses L-rhamnopyranose(in) + H(+)(in) = L-rhamnopyranose(out) + H(+)(out). Its function is as follows. Uptake of L-rhamnose across the cytoplasmic membrane with the concomitant transport of protons into the cell (symport system). In Escherichia coli (strain 55989 / EAEC), this protein is L-rhamnose-proton symporter.